A 298-amino-acid polypeptide reads, in one-letter code: UDP-N-acetylenolpyruvoylglucosamine reductase (298 aa).

One can recognise an FAD-binding PCMH-type domain in the interval 26-191 (KTGGAADVFV…LDATFSLALE (166 aa)). Arg170 is a catalytic residue. Ser220 (proton donor) is an active-site residue. Glu290 is an active-site residue.

It belongs to the MurB family. It depends on FAD as a cofactor.

The protein resides in the cytoplasm. It catalyses the reaction UDP-N-acetyl-alpha-D-muramate + NADP(+) = UDP-N-acetyl-3-O-(1-carboxyvinyl)-alpha-D-glucosamine + NADPH + H(+). It participates in cell wall biogenesis; peptidoglycan biosynthesis. Cell wall formation. The chain is UDP-N-acetylenolpyruvoylglucosamine reductase from Listeria monocytogenes serotype 4b (strain CLIP80459).